The following is a 596-amino-acid chain: Proton channel OTOP3 (596 aa).

The span at 1 to 21 (MGRGARAAAAQSRWGRASRAS) shows a compositional bias: low complexity. A disordered region spans residues 1 to 59 (MGRGARAAAAQSRWGRASRASVSPGRTIRSAPAVGEAQETEAAPEKENRVDVGAEERAA). Residues 1–88 (MGRGARAAAA…RDRQAQKAGQ (88 aa)) are Cytoplasmic-facing. Phosphoserine occurs at positions 21 and 23. Basic and acidic residues predominate over residues 43–59 (APEKENRVDVGAEERAA). Residues 89-109 (LFSGLLALNVVFLGGAFICSM) traverse the membrane as a helical segment. Topologically, residues 110–119 (IFNKVAVTLG) are extracellular. The helical transmembrane segment at 120–143 (DVWILLATLKVLSLLWLLYYVAST) threads the bilayer. Topologically, residues 144 to 159 (TRRPHAVLYQDPHAGP) are cytoplasmic. A helical membrane pass occupies residues 160–181 (LWVRGSLVLFGSCTFCLNIFRV). Residues 182–193 (GYDVSHIRCKSQ) are Extracellular-facing. Residues 194-217 (LDLVFSVIEMVFIGVQTWVLWKHC) form a helical membrane-spanning segment. Residues 218–225 (KDCVRVQT) are Cytoplasmic-facing. The chain crosses the membrane as a helical span at residues 226 to 248 (NFTRCGLMLTLATNLLLWVLAVT). Residues 249–295 (NDSMHREIEAELGILMEKSTGNETNTCLCLNATACEAFRRGFLMLYP) lie on the Extracellular side of the membrane. A helical transmembrane segment spans residues 296–312 (FSTEYCLICCAVLFVMW). Residues 313-338 (KNVGRHVAPHMGAHPATAPFHLHGAI) are Cytoplasmic-facing. A helical membrane pass occupies residues 339-358 (FGPLLGLLVLLAGVCVFVLF). Over 359-372 (QIEASGPAIACQYF) the chain is Extracellular. Residues 373–395 (TLYYAFYVAVLPTMSLACLAGTA) traverse the membrane as a helical segment. The Cytoplasmic portion of the chain corresponds to 396 to 413 (IHGLEERELDTVKNPTRS). Residues 414–435 (LDVVLLMGAALGQMGIAYFSIV) form a helical membrane-spanning segment. At 436-446 (AIVAKRPHELL) the chain is on the extracellular side. The chain crosses the membrane as a helical span at residues 447–469 (NRLILAYSLLLILQHIAQNLFII). At 470–529 (EGLHRRPLWETVPEGLAGKQEAEPPRRGSLLELGQGLQRASLAYIHSYSHLNWKRRALKE) the chain is on the cytoplasmic side. A helical transmembrane segment spans residues 530–547 (ISLFLILCNITLWMMPAF). The Extracellular portion of the chain corresponds to 548-566 (GIHPEFENGLEKDFYGYQI). Residues 567 to 589 (WFAIVNFGLPLGVFYRMHSVGGL) traverse the membrane as a helical segment. The Cytoplasmic portion of the chain corresponds to 590–596 (VEVYLGA).

It belongs to the otopetrin family. In terms of assembly, homodimer.

It localises to the cell membrane. The catalysed reaction is H(+)(in) = H(+)(out). Its activity is regulated as follows. Activated by extracellular acidification. Activated by Zn(2+) under non-acidic conditions. In terms of biological role, proton-selective channel gated by extracellular protons. The sequence is that of Proton channel OTOP3 from Homo sapiens (Human).